Consider the following 237-residue polypeptide: MRPSRRAPDELRPVTLERGVVKYAEGSCLVKFGDTHVLVTATLEDRLPPWLKGQGRGWVTAEYGMLPRATSERTRREASAGKQSGRTVEIQRLIGRSLRTIINLEALGERQITVDCDVLQADGGTRTASITGAWVALADCVNWMKARNMVKANVLRDNVAAISCGIYNGTPVLDLDYAEDSEAQTDANFVMTGDGRIIEVQGTAEREPFTQDELLALMALAQKGIARLVDLQKLAVA.

Residues arginine 86 and 124–126 each bind phosphate; that span reads GTR.

The protein belongs to the RNase PH family. Homohexameric ring arranged as a trimer of dimers.

The enzyme catalyses tRNA(n+1) + phosphate = tRNA(n) + a ribonucleoside 5'-diphosphate. Functionally, phosphorolytic 3'-5' exoribonuclease that plays an important role in tRNA 3'-end maturation. Removes nucleotide residues following the 3'-CCA terminus of tRNAs; can also add nucleotides to the ends of RNA molecules by using nucleoside diphosphates as substrates, but this may not be physiologically important. Probably plays a role in initiation of 16S rRNA degradation (leading to ribosome degradation) during starvation. The polypeptide is Ribonuclease PH (Bradyrhizobium diazoefficiens (strain JCM 10833 / BCRC 13528 / IAM 13628 / NBRC 14792 / USDA 110)).